We begin with the raw amino-acid sequence, 310 residues long: Protoheme IX farnesyltransferase 2 (310 aa).

9 consecutive transmembrane segments (helical) span residues 25 to 45, 49 to 69, 98 to 118, 121 to 141, 145 to 165, 176 to 196, 222 to 242, 245 to 265, and 277 to 297; these read PGIIFGNLISVAGGFLLAAKG, LVLMLASLVGLSLVVASGCAI, HVLLFGIALGVLGFGILALFT, LALLFAAIGYVVYVGIYSLYM, SVYGTLVGSFSGAVPPVVGYC, VILLLMFSLWQMPHSYAIAIF, IVLYIAVFALVSTMLPLAGYT, AFMAVTCATSLWWLTMALKGY, and QVFGFSIITITALSVTMALDF.

Belongs to the UbiA prenyltransferase family. Protoheme IX farnesyltransferase subfamily.

Its subcellular location is the cell inner membrane. The enzyme catalyses heme b + (2E,6E)-farnesyl diphosphate + H2O = Fe(II)-heme o + diphosphate. It participates in porphyrin-containing compound metabolism; heme O biosynthesis; heme O from protoheme: step 1/1. Converts heme B (protoheme IX) to heme O by substitution of the vinyl group on carbon 2 of heme B porphyrin ring with a hydroxyethyl farnesyl side group. The sequence is that of Protoheme IX farnesyltransferase 2 from Shewanella sp. (strain ANA-3).